The primary structure comprises 181 residues: Crossover junction endodeoxyribonuclease RuvC (181 aa).

Catalysis depends on residues D7, E67, and D139. Mg(2+) is bound by residues D7, E67, and D139.

The protein belongs to the RuvC family. Homodimer which binds Holliday junction (HJ) DNA. The HJ becomes 2-fold symmetrical on binding to RuvC with unstacked arms; it has a different conformation from HJ DNA in complex with RuvA. In the full resolvosome a probable DNA-RuvA(4)-RuvB(12)-RuvC(2) complex forms which resolves the HJ. Mg(2+) is required as a cofactor.

It localises to the cytoplasm. The catalysed reaction is Endonucleolytic cleavage at a junction such as a reciprocal single-stranded crossover between two homologous DNA duplexes (Holliday junction).. Its function is as follows. The RuvA-RuvB-RuvC complex processes Holliday junction (HJ) DNA during genetic recombination and DNA repair. Endonuclease that resolves HJ intermediates. Cleaves cruciform DNA by making single-stranded nicks across the HJ at symmetrical positions within the homologous arms, yielding a 5'-phosphate and a 3'-hydroxyl group; requires a central core of homology in the junction. The consensus cleavage sequence is 5'-(A/T)TT(C/G)-3'. Cleavage occurs on the 3'-side of the TT dinucleotide at the point of strand exchange. HJ branch migration catalyzed by RuvA-RuvB allows RuvC to scan DNA until it finds its consensus sequence, where it cleaves and resolves the cruciform DNA. The sequence is that of Crossover junction endodeoxyribonuclease RuvC from Cupriavidus pinatubonensis (strain JMP 134 / LMG 1197) (Cupriavidus necator (strain JMP 134)).